Here is a 333-residue protein sequence, read N- to C-terminus: Ribosome biogenesis regulatory protein homolog (333 aa).

Disordered regions lie at residues 227-248 and 271-333; these read KANV…VSGE and AAAV…ARKG. The span at 278-295 shows a compositional bias: basic and acidic residues; sequence LREKKEKSERKGAKDQTR. Residues 324 to 333 are compositionally biased toward basic residues; the sequence is GANKAKARKG.

It belongs to the RRS1 family.

Its subcellular location is the nucleus. It localises to the nucleolus. Involved in ribosomal large subunit assembly. This Caenorhabditis elegans protein is Ribosome biogenesis regulatory protein homolog.